The following is a 57-amino-acid chain: MLKWALIFFVISIIAGFFGFSGVSAATATIARVLFGIALVIFLIFLVLALMAGQAIL.

2 consecutive transmembrane segments (helical) span residues 4–24 (WALI…SGVS) and 33–53 (VLFG…LMAG).

It belongs to the UPF0391 family.

The protein localises to the cell membrane. The polypeptide is UPF0391 membrane protein RL4195 (Rhizobium johnstonii (strain DSM 114642 / LMG 32736 / 3841) (Rhizobium leguminosarum bv. viciae)).